A 397-amino-acid chain; its full sequence is Bifunctional arginine demethylase and lysyl-hydroxylase psr-1 (397 aa).

Residues 146-310 (RKTKKLSEDY…LVWPKTVRGR (165 aa)) form the JmjC domain. A substrate-binding site is contributed by T189. Residues H192 and D194 each coordinate Fe cation. A 2-oxoglutarate-binding site is contributed by N202. Residue K209 participates in substrate binding. Fe cation is bound at residue H278. T290 contributes to the 2-oxoglutarate binding site. The segment covering 334 to 344 (SCTDTPPQSLN) has biased composition (polar residues). The interval 334-383 (SCTDTPPQSLNDSSSDSSSSSSSSDDSSDSETEEDSGRCGLGNRKRRNDV) is disordered. Residues 345–358 (DSSSDSSSSSSSSD) show a composition bias toward low complexity.

Belongs to the JMJD6 family. As to quaternary structure, interacts with ced-5 and ced-12. It depends on Fe(2+) as a cofactor.

The protein localises to the nucleus. In terms of biological role, dioxygenase that can both act as a histone arginine demethylase and a lysyl-hydroxylase. The protein is Bifunctional arginine demethylase and lysyl-hydroxylase psr-1 (psr-1) of Caenorhabditis briggsae.